Consider the following 113-residue polypeptide: Large ribosomal subunit protein uL24 (113 aa).

It belongs to the universal ribosomal protein uL24 family. As to quaternary structure, part of the 50S ribosomal subunit.

One of two assembly initiator proteins, it binds directly to the 5'-end of the 23S rRNA, where it nucleates assembly of the 50S subunit. Functionally, one of the proteins that surrounds the polypeptide exit tunnel on the outside of the subunit. The polypeptide is Large ribosomal subunit protein uL24 (Synechococcus sp. (strain RCC307)).